The sequence spans 1400 residues: DNA-directed RNA polymerase subunit beta' (1400 aa).

Zn(2+) is bound by residues Cys70, Cys72, Cys85, and Cys88. Residues Asp460, Asp462, and Asp464 each coordinate Mg(2+). Zn(2+)-binding residues include Cys814, Cys887, Cys894, and Cys897.

This sequence belongs to the RNA polymerase beta' chain family. The RNAP catalytic core consists of 2 alpha, 1 beta, 1 beta' and 1 omega subunit. When a sigma factor is associated with the core the holoenzyme is formed, which can initiate transcription. Mg(2+) is required as a cofactor. Zn(2+) serves as cofactor.

The catalysed reaction is RNA(n) + a ribonucleoside 5'-triphosphate = RNA(n+1) + diphosphate. Its function is as follows. DNA-dependent RNA polymerase catalyzes the transcription of DNA into RNA using the four ribonucleoside triphosphates as substrates. The chain is DNA-directed RNA polymerase subunit beta' from Marinomonas sp. (strain MWYL1).